A 421-amino-acid chain; its full sequence is Histidine--tRNA ligase (421 aa).

It belongs to the class-II aminoacyl-tRNA synthetase family.

It localises to the cytoplasm. It catalyses the reaction tRNA(His) + L-histidine + ATP = L-histidyl-tRNA(His) + AMP + diphosphate + H(+). The sequence is that of Histidine--tRNA ligase from Pyrobaculum calidifontis (strain DSM 21063 / JCM 11548 / VA1).